Reading from the N-terminus, the 159-residue chain is Ubiquitin-like protein ATG12 (159 aa).

Residues 1 to 40 (MASPQPPFGGGSNSNSNTASPSNNLSPTASPLLEGRDSPN) are disordered. The span at 13 to 27 (NSNSNTASPSNNLSP) shows a compositional bias: low complexity. G159 is covalently cross-linked (Glycyl lysine isopeptide (Gly-Lys) (interchain with K-218 in ATG5)).

It belongs to the ATG12 family. In terms of assembly, forms a conjugate with ATG5. Forms a thioester bond with the 'Cys-116' of ATG10. Interacts with the ATG7 C-terminal 40 amino acids domain. The ATG12-ATG5 conjugate forms a complex with several units of ATG16. The ATG12-ATG5 conjugate also associates with ATG3.

It localises to the preautophagosomal structure membrane. The protein localises to the cytoplasm. Functionally, ubiquitin-like protein involved in cytoplasm to vacuole transport (Cvt), autophagy vesicles formation, mitophagy, and nucleophagy. Conjugation with ATG5 through a ubiquitin-like conjugating system involving also ATG7 as an E1-like activating enzyme and ATG10 as an E2-like conjugating enzyme, is essential for its function. The ATG12-ATG5 conjugate acts as an E3-like enzyme which is required for lipidation of ATG8 and ATG8 association to the vesicle membranes. ATG12-ATG5 rearranges the ATG3 catalytic center and enhances its E2 activity. Plays a role in sexual development and perithecia formation. The chain is Ubiquitin-like protein ATG12 from Sordaria macrospora (strain ATCC MYA-333 / DSM 997 / K(L3346) / K-hell).